Here is a 308-residue protein sequence, read N- to C-terminus: 1D-myo-inositol 2-acetamido-2-deoxy-alpha-D-glucopyranoside deacetylase (308 aa).

Residues H18, D21, and H153 each coordinate Zn(2+).

Belongs to the MshB deacetylase family. The cofactor is Zn(2+).

The enzyme catalyses 1D-myo-inositol 2-acetamido-2-deoxy-alpha-D-glucopyranoside + H2O = 1D-myo-inositol 2-amino-2-deoxy-alpha-D-glucopyranoside + acetate. Functionally, catalyzes the deacetylation of 1D-myo-inositol 2-acetamido-2-deoxy-alpha-D-glucopyranoside (GlcNAc-Ins) in the mycothiol biosynthesis pathway. The polypeptide is 1D-myo-inositol 2-acetamido-2-deoxy-alpha-D-glucopyranoside deacetylase (Salinispora arenicola (strain CNS-205)).